A 660-amino-acid polypeptide reads, in one-letter code: Peroxisomal acyl-coenzyme A oxidase 1 (660 aa).

S26 bears the Phosphoserine mark. N6-succinyllysine is present on residues K89 and K90. The FAD site is built by T139 and G178. Residue K216 is modified to N6-acetyllysine. The residue at position 241 (K241) is an N6-succinyllysine. K255, K267, and K272 each carry N6-acetyllysine. An N6-succinyllysine modification is found at K349. E421 functions as the Proton acceptor in the catalytic mechanism. An N6-acetyllysine; alternate mark is found at K437 and K446. K437 and K446 each carry N6-succinyllysine; alternate. An N6-acetyllysine modification is found at K500. K512 is modified (N6-acetyllysine; alternate). K512 carries the N6-succinyllysine; alternate modification. At K542 the chain carries N6-succinyllysine. K637 is modified (N6-acetyllysine; alternate). At K637 the chain carries N6-succinyllysine; alternate. K643 carries the post-translational modification N6-succinyllysine. A Phosphoserine modification is found at S649. K651 bears the N6-acetyllysine mark. Position 654 is an N6-succinyllysine (K654). Positions 658–660 (SKL) match the Microbody targeting signal motif.

This sequence belongs to the acyl-CoA oxidase family. As to quaternary structure, homodimer. Interacts with LONP2. The cofactor is FAD.

It localises to the peroxisome. It carries out the reaction a 2,3-saturated acyl-CoA + O2 = a (2E)-enoyl-CoA + H2O2. It catalyses the reaction hexadecanoyl-CoA + O2 = (2E)-hexadecenoyl-CoA + H2O2. The enzyme catalyses dodecanoyl-CoA + O2 = (2E)-dodecenoyl-CoA + H2O2. The catalysed reaction is octanoyl-CoA + O2 = (2E)-octenoyl-CoA + H2O2. It carries out the reaction decanoyl-CoA + O2 = (2E)-decenoyl-CoA + H2O2. It catalyses the reaction tetradecanoyl-CoA + O2 = (2E)-tetradecenoyl-CoA + H2O2. The enzyme catalyses hexadecanedioyl-CoA + O2 = (2E)-hexadecenedioyl-CoA + H2O2. The catalysed reaction is tetracosanoyl-CoA + O2 = (2E)-tetracosenoyl-CoA + H2O2. It carries out the reaction glutaryl-CoA + O2 = (2E)-glutaconyl-CoA + H2O2. It catalyses the reaction hexanoyl-CoA + O2 = (2E)-hexenoyl-CoA + H2O2. The enzyme catalyses octadecanoyl-CoA + O2 = (2E)-octadecenoyl-CoA + H2O2. The catalysed reaction is (5Z,8Z,11Z,14Z,17Z)-eicosapentaenoyl-CoA + O2 = (2E,5Z,8Z,11Z,14Z,17Z)-icosahexaenoyl-CoA + H2O2. It carries out the reaction (6Z,9Z,12Z,15Z,18Z,21Z)-tetracosahexaenoyl-CoA + O2 = (2E,6Z,9Z,12Z,15Z,18Z,21Z)-tetracosaheptaenoyl-CoA + H2O2. It functions in the pathway lipid metabolism; peroxisomal fatty acid beta-oxidation. Involved in the initial and rate-limiting step of peroxisomal beta-oxidation of straight-chain saturated and unsaturated very-long-chain fatty acids. Catalyzes the desaturation of fatty acyl-CoAs such as palmitoyl-CoA (hexadecanoyl-CoA) to 2-trans-enoyl-CoAs ((2E)-enoyl-CoAs) such as (2E)-hexadecenoyl-CoA, and donates electrons directly to molecular oxygen (O(2)), thereby producing hydrogen peroxide (H(2)O(2)). Functionally, shows highest activity against medium-chain fatty acyl-CoAs. Shows optimum activity with a chain length of 10 carbons (decanoyl-CoA) in vitro. Its function is as follows. Is active against a much broader range of substrates and shows activity towards long-chain acyl-CoAs. This chain is Peroxisomal acyl-coenzyme A oxidase 1, found in Pongo abelii (Sumatran orangutan).